Here is a 268-residue protein sequence, read N- to C-terminus: Formamidopyrimidine-DNA glycosylase (268 aa).

Pro2 acts as the Schiff-base intermediate with DNA in catalysis. Glu3 (proton donor) is an active-site residue. Lys56 (proton donor; for beta-elimination activity) is an active-site residue. 3 residues coordinate DNA: His91, Arg110, and Arg149. The FPG-type zinc finger occupies 234–268; the sequence is QVYGRFNQACPNCGQPLKRSRIGGRSSHYCEKCQQ. Arg258 functions as the Proton donor; for delta-elimination activity in the catalytic mechanism.

This sequence belongs to the FPG family. In terms of assembly, monomer. Requires Zn(2+) as cofactor.

The catalysed reaction is Hydrolysis of DNA containing ring-opened 7-methylguanine residues, releasing 2,6-diamino-4-hydroxy-5-(N-methyl)formamidopyrimidine.. The enzyme catalyses 2'-deoxyribonucleotide-(2'-deoxyribose 5'-phosphate)-2'-deoxyribonucleotide-DNA = a 3'-end 2'-deoxyribonucleotide-(2,3-dehydro-2,3-deoxyribose 5'-phosphate)-DNA + a 5'-end 5'-phospho-2'-deoxyribonucleoside-DNA + H(+). In terms of biological role, involved in base excision repair of DNA damaged by oxidation or by mutagenic agents. Acts as a DNA glycosylase that recognizes and removes damaged bases. Has a preference for oxidized purines, such as 7,8-dihydro-8-oxoguanine (8-oxoG). Has AP (apurinic/apyrimidinic) lyase activity and introduces nicks in the DNA strand. Cleaves the DNA backbone by beta-delta elimination to generate a single-strand break at the site of the removed base with both 3'- and 5'-phosphates. This chain is Formamidopyrimidine-DNA glycosylase, found in Syntrophomonas wolfei subsp. wolfei (strain DSM 2245B / Goettingen).